The primary structure comprises 477 residues: Probable cytosolic Fe-S cluster assembly factor GL21135 (477 aa).

Residues C23, C69, C72, C75, C188, C244, C396, and C400 each contribute to the [4Fe-4S] cluster site.

The protein belongs to the NARF family.

In terms of biological role, component of the cytosolic iron-sulfur (Fe/S) protein assembly machinery. Required for maturation of extramitochondrial Fe/S proteins. This chain is Probable cytosolic Fe-S cluster assembly factor GL21135, found in Drosophila persimilis (Fruit fly).